The sequence spans 154 residues: Nuclear cap-binding protein subunit 2 (154 aa).

MRNA-binding positions include Tyr-10, Tyr-33, Arg-102–Asp-106, Arg-113–Arg-117, and Gln-123–Val-124. Residues Cys-30–Gly-108 enclose the RRM domain.

It belongs to the RRM NCBP2 family. Component of the nuclear cap-binding complex (CBC), a heterodimer composed of Cbp80 and Cbp20 that interacts with m7GpppG-capped RNA. Interacts with Ars2.

Its subcellular location is the nucleus. Its function is as follows. Component of the cap-binding complex (CBC), which binds co-transcriptionally to the 5' cap of pre-mRNAs and is involved in various processes such as pre-mRNA splicing and RNA-mediated gene silencing (RNAi). The CBC complex is involved in miRNA-mediated RNA interference via its interaction with Ars2 and is required for primary microRNAs (miRNAs) processing. Also involved in innate immunity via the short interfering RNAs (siRNAs) processing machinery by restricting the viral RNA production. In the CBC complex, Cbp20 recognizes and binds capped RNAs (m7GpppG-capped RNA) but requires Cbp80 to stabilize the movement of its N-terminal loop and lock the CBC into a high affinity cap-binding state with the cap structure. This chain is Nuclear cap-binding protein subunit 2 (Cbp20), found in Drosophila melanogaster (Fruit fly).